A 187-amino-acid polypeptide reads, in one-letter code: Protein GrpE (187 aa).

The interval 1 to 30 is disordered; the sequence is MEKKETKSESEKTNKQDNKNTKSQKKENLN.

This sequence belongs to the GrpE family. As to quaternary structure, homodimer.

It localises to the cytoplasm. Its function is as follows. Participates actively in the response to hyperosmotic and heat shock by preventing the aggregation of stress-denatured proteins, in association with DnaK and GrpE. It is the nucleotide exchange factor for DnaK and may function as a thermosensor. Unfolded proteins bind initially to DnaJ; upon interaction with the DnaJ-bound protein, DnaK hydrolyzes its bound ATP, resulting in the formation of a stable complex. GrpE releases ADP from DnaK; ATP binding to DnaK triggers the release of the substrate protein, thus completing the reaction cycle. Several rounds of ATP-dependent interactions between DnaJ, DnaK and GrpE are required for fully efficient folding. This Borreliella burgdorferi (strain ATCC 35210 / DSM 4680 / CIP 102532 / B31) (Borrelia burgdorferi) protein is Protein GrpE.